Consider the following 282-residue polypeptide: Probable methylxanthine N7-demethylase NdmC (282 aa).

It catalyses the reaction 7-methylxanthine + NADPH + O2 + H(+) = xanthine + formaldehyde + NADP(+) + H2O. The catalysed reaction is 7-methylxanthine + NADH + O2 + H(+) = xanthine + formaldehyde + NAD(+) + H2O. Functionally, involved in the caffeine degradation, which is the essential first step for assimilating the carbon and nitrogen in caffeine. Probably catalyzes the N7-demethylation of 7-methylxanthine to produce xanthine and formaldehyde. The protein is Probable methylxanthine N7-demethylase NdmC of Pseudomonas sp. (strain TJI-51).